Consider the following 349-residue polypeptide: Twinfilin-2-A (349 aa).

ADF-H domains are found at residues 4-139 (QTGI…KHVS) and 177-313 (GLSF…DEVH). The segment at 321-349 (QAFAKPKGPAGKRGQKRLIKGPGENGEDS) is disordered.

Belongs to the actin-binding proteins ADF family. Twinfilin subfamily. Interacts with G-actin; ADP-actin form and capping protein (CP).

The protein localises to the cytoplasm. Its subcellular location is the cytoskeleton. It localises to the perinuclear region. Its function is as follows. Actin-binding protein involved in motile and morphological processes. Inhibits actin polymerization, likely by sequestering G-actin. The sequence is that of Twinfilin-2-A (twf2-a) from Xenopus laevis (African clawed frog).